A 366-amino-acid chain; its full sequence is Quinolinate synthase (366 aa).

Iminosuccinate contacts are provided by H44 and S61. C108 serves as a coordination point for [4Fe-4S] cluster. Residues 139–141 (YIN) and S160 each bind iminosuccinate. A [4Fe-4S] cluster-binding site is contributed by C228. Iminosuccinate-binding positions include 254 to 256 (HPE) and T271. A [4Fe-4S] cluster-binding site is contributed by C318.

It belongs to the quinolinate synthase family. Type 3 subfamily. Requires [4Fe-4S] cluster as cofactor.

The protein localises to the cytoplasm. The catalysed reaction is iminosuccinate + dihydroxyacetone phosphate = quinolinate + phosphate + 2 H2O + H(+). The protein operates within cofactor biosynthesis; NAD(+) biosynthesis; quinolinate from iminoaspartate: step 1/1. Functionally, catalyzes the condensation of iminoaspartate with dihydroxyacetone phosphate to form quinolinate. In Listeria innocua serovar 6a (strain ATCC BAA-680 / CLIP 11262), this protein is Quinolinate synthase.